A 295-amino-acid chain; its full sequence is MAAIIDGKAIAAAIRAEVAAGVTALTAEGGAAPGLAVVLVGEDPASLVYVGRKIAQTRQAGIRSFEHRLPAGTGEADLLGLIERLNRDDEVHGILVQLPLPRHIRADRVLDAIDPLKDVDGFHPVNVGRLSIGTDGLVPCTPLGCMLLLETVIDDFRGLKAVVIGKSNIVGKPVAMLLLERECTVTVTHILTRNLPDIVRTADIVVVAAGSPGLVRGDWVRPGAVVIDVGINRIGEPGKDSRLVGDAAFDELGHAAAITPVPGGVGPMTVACLLRNTLVAARRQQGADASPKKGA.

NADP(+) contacts are provided by residues 165 to 167 (GKS), Ile190, and Ile231.

Belongs to the tetrahydrofolate dehydrogenase/cyclohydrolase family. As to quaternary structure, homodimer.

The enzyme catalyses (6R)-5,10-methylene-5,6,7,8-tetrahydrofolate + NADP(+) = (6R)-5,10-methenyltetrahydrofolate + NADPH. It carries out the reaction (6R)-5,10-methenyltetrahydrofolate + H2O = (6R)-10-formyltetrahydrofolate + H(+). The protein operates within one-carbon metabolism; tetrahydrofolate interconversion. Its function is as follows. Catalyzes the oxidation of 5,10-methylenetetrahydrofolate to 5,10-methenyltetrahydrofolate and then the hydrolysis of 5,10-methenyltetrahydrofolate to 10-formyltetrahydrofolate. The chain is Bifunctional protein FolD 1 from Rhizorhabdus wittichii (strain DSM 6014 / CCUG 31198 / JCM 15750 / NBRC 105917 / EY 4224 / RW1) (Sphingomonas wittichii).